Consider the following 549-residue polypeptide: Glucose-6-phosphate isomerase (549 aa).

The active-site Proton donor is the glutamate 355. Residues histidine 387 and lysine 515 contribute to the active site.

The protein belongs to the GPI family.

Its subcellular location is the cytoplasm. The enzyme catalyses alpha-D-glucose 6-phosphate = beta-D-fructose 6-phosphate. The protein operates within carbohydrate biosynthesis; gluconeogenesis. It functions in the pathway carbohydrate degradation; glycolysis; D-glyceraldehyde 3-phosphate and glycerone phosphate from D-glucose: step 2/4. Catalyzes the reversible isomerization of glucose-6-phosphate to fructose-6-phosphate. The protein is Glucose-6-phosphate isomerase of Pasteurella multocida (strain Pm70).